A 276-amino-acid chain; its full sequence is 3-keto-5-aminohexanoate cleavage enzyme (276 aa).

E14 is a binding site for (5S)-5-amino-3-oxohexanoate. Zn(2+) is bound by residues H46 and H48. 4 residues coordinate (5S)-5-amino-3-oxohexanoate: S82, G85, T106, and N108. Position 230 (E230) interacts with Zn(2+).

It belongs to the BKACE family. Kce subfamily. As to quaternary structure, homotetramer. Requires Zn(2+) as cofactor.

It carries out the reaction (5S)-5-amino-3-oxohexanoate + acetyl-CoA = (3S)-3-aminobutanoyl-CoA + acetoacetate. Its pathway is amino-acid degradation; L-lysine degradation via acetate pathway. Its function is as follows. Involved in the anaerobic fermentation of lysine. Catalyzes the reversible reaction between 3-keto-5-aminohexanoate (KAH) and acetyl-CoA to form 3-aminobutyryl-CoA and acetoacetate. The reaction involves the deprotonation of KAH, the nucleophilic addition onto acetyl-CoA and the intramolecular transfer of the CoA moiety. This chain is 3-keto-5-aminohexanoate cleavage enzyme, found in Cloacimonas acidaminovorans (strain Evry).